A 1175-amino-acid polypeptide reads, in one-letter code: Phospholipid-transporting ATPase IF (1175 aa).

A run of 4 helical transmembrane segments spans residues 69–89, 91–111, 287–307, and 338–358; these read FYFL…SPIT, GLPL…EDWL, NTFL…STIL, and FISD…ISLY. Catalysis depends on Asp-407, which acts as the 4-aspartylphosphate intermediate. ATP-binding residues include Asp-407, Lys-408, Thr-409, Glu-530, Phe-571, Lys-594, Arg-625, Thr-705, Gly-706, Asp-707, Arg-793, and Lys-799. Position 407 (Asp-407) interacts with Mg(2+). Thr-409 contributes to the Mg(2+) binding site. Asp-820 contacts Mg(2+). 2 residues coordinate ATP: Asn-823 and Asp-824. Asp-824 contributes to the Mg(2+) binding site. The next 6 membrane-spanning stretches (helical) occupy residues 862 to 882, 910 to 930, 963 to 983, 994 to 1014, 1033 to 1053, and 1060 to 1080; these read LLFV…QYFF, VYLT…YSLV, WTVL…FLVG, MFGN…TVTV, GSII…WPFL, and FVFI…LMVV.

Belongs to the cation transport ATPase (P-type) (TC 3.A.3) family. Type IV subfamily. Component of a P4-ATPase flippase complex which consists of a catalytic alpha subunit ATP11B and an accessory beta subunit TMEM30A. Mg(2+) serves as cofactor. Expressed in retina, brain, liver, testes and kidney (at protein level).

The protein localises to the recycling endosome membrane. Its subcellular location is the early endosome. It localises to the endoplasmic reticulum. It is found in the golgi apparatus. The protein resides in the trans-Golgi network. The enzyme catalyses ATP + H2O + phospholipidSide 1 = ADP + phosphate + phospholipidSide 2.. It catalyses the reaction a 1,2-diacyl-sn-glycero-3-phospho-L-serine(out) + ATP + H2O = a 1,2-diacyl-sn-glycero-3-phospho-L-serine(in) + ADP + phosphate + H(+). It carries out the reaction a 1,2-diacyl-sn-glycero-3-phosphoethanolamine(out) + ATP + H2O = a 1,2-diacyl-sn-glycero-3-phosphoethanolamine(in) + ADP + phosphate + H(+). Its function is as follows. Catalytic component of a P4-ATPase flippase complex which catalyzes the hydrolysis of ATP coupled to the transport of aminophospholipids, phosphatidylserines (PS) and phosphatidylethanolamines (PE), from the outer to the inner leaflet of intracellular membranes. May contribute to the maintenance of membrane lipid asymmetry in endosome compartment. This is Phospholipid-transporting ATPase IF from Mus musculus (Mouse).